A 292-amino-acid polypeptide reads, in one-letter code: [LysW]-aminoadipate kinase (292 aa).

Substrate is bound by residues Arg89 and Asn193.

Belongs to the acetylglutamate kinase family. LysZ subfamily.

The protein localises to the cytoplasm. It catalyses the reaction [amino-group carrier protein]-C-terminal-N-(1,4-dicarboxybutan-1-yl)-L-glutamine + ATP = [amino-group carrier protein]-C-terminal-N-(1-carboxy-5-phosphooxy-5-oxopentan-1-yl)-L-glutamine + ADP. It participates in amino-acid biosynthesis; L-lysine biosynthesis via AAA pathway; L-lysine from L-alpha-aminoadipate (Thermus route): step 2/5. Its function is as follows. Catalyzes the phosphorylation of LysW-gamma-alpha-aminoadipate. The sequence is that of [LysW]-aminoadipate kinase from Deinococcus radiodurans (strain ATCC 13939 / DSM 20539 / JCM 16871 / CCUG 27074 / LMG 4051 / NBRC 15346 / NCIMB 9279 / VKM B-1422 / R1).